Consider the following 562-residue polypeptide: Alpha-amylase 2 (562 aa).

Asparagine 236 lines the Ca(2+) pocket. Aspartate 309 (nucleophile) is an active-site residue. Glutamate 338 acts as the Proton donor in catalysis.

It belongs to the glycosyl hydrolase 13 family. Monomer. Requires Ca(2+) as cofactor.

The protein localises to the cytoplasm. The enzyme catalyses Endohydrolysis of (1-&gt;4)-alpha-D-glucosidic linkages in polysaccharides containing three or more (1-&gt;4)-alpha-linked D-glucose units.. This chain is Alpha-amylase 2 (amyB), found in Dictyoglomus thermophilum (strain ATCC 35947 / DSM 3960 / H-6-12).